We begin with the raw amino-acid sequence, 368 residues long: tRNA-specific 2-thiouridylase MnmA (368 aa).

Residues 11 to 18 (GMSGGVDS) and methionine 37 each bind ATP. An interaction with target base in tRNA region spans residues 97-99 (NPD). The active-site Nucleophile is the cysteine 102. Cysteines 102 and 199 form a disulfide. ATP is bound at residue glycine 127. The tract at residues 149–151 (KDQ) is interaction with tRNA. Cysteine 199 (cysteine persulfide intermediate) is an active-site residue. Residues 311-312 (RY) are interaction with tRNA.

This sequence belongs to the MnmA/TRMU family. As to quaternary structure, interacts with TusE.

It is found in the cytoplasm. The enzyme catalyses S-sulfanyl-L-cysteinyl-[protein] + uridine(34) in tRNA + AH2 + ATP = 2-thiouridine(34) in tRNA + L-cysteinyl-[protein] + A + AMP + diphosphate + H(+). In terms of biological role, catalyzes the 2-thiolation of uridine at the wobble position (U34) of tRNA(Lys), tRNA(Glu) and tRNA(Gln), leading to the formation of s(2)U34, the first step of tRNA-mnm(5)s(2)U34 synthesis. Sulfur is provided by IscS, via a sulfur-relay system. Binds ATP and its substrate tRNAs. This Salmonella choleraesuis (strain SC-B67) protein is tRNA-specific 2-thiouridylase MnmA.